Reading from the N-terminus, the 372-residue chain is tRNA-specific 2-thiouridylase MnmA (372 aa).

ATP is bound by residues 9–16 (GMSGGVDS) and methionine 35. The segment at 95-97 (NPD) is interaction with target base in tRNA. The active-site Nucleophile is cysteine 100. Cysteine 100 and cysteine 201 are disulfide-bonded. Glycine 124 contributes to the ATP binding site. An interaction with tRNA region spans residues 151 to 153 (KDQ). Cysteine 201 functions as the Cysteine persulfide intermediate in the catalytic mechanism. Positions 317-318 (RY) are interaction with tRNA.

This sequence belongs to the MnmA/TRMU family.

It localises to the cytoplasm. It catalyses the reaction S-sulfanyl-L-cysteinyl-[protein] + uridine(34) in tRNA + AH2 + ATP = 2-thiouridine(34) in tRNA + L-cysteinyl-[protein] + A + AMP + diphosphate + H(+). In terms of biological role, catalyzes the 2-thiolation of uridine at the wobble position (U34) of tRNA, leading to the formation of s(2)U34. The protein is tRNA-specific 2-thiouridylase MnmA of Herminiimonas arsenicoxydans.